The chain runs to 270 residues: tRNA pseudouridine synthase A (270 aa).

The Nucleophile role is filled by aspartate 52. Residue tyrosine 110 coordinates substrate.

This sequence belongs to the tRNA pseudouridine synthase TruA family. In terms of assembly, homodimer.

The catalysed reaction is uridine(38/39/40) in tRNA = pseudouridine(38/39/40) in tRNA. Functionally, formation of pseudouridine at positions 38, 39 and 40 in the anticodon stem and loop of transfer RNAs. This chain is tRNA pseudouridine synthase A, found in Paraburkholderia phytofirmans (strain DSM 17436 / LMG 22146 / PsJN) (Burkholderia phytofirmans).